Reading from the N-terminus, the 147-residue chain is Ribonuclease 4 (147 aa).

The first 28 residues, 1-28 (MDIQRTQSLLLLLLLTLLGLGLVQPSYG), serve as a signal peptide directing secretion. At Q29 the chain carries Pyrrolidone carboxylic acid. Residues R35, H40, K68, N71, and T72 each coordinate dUMP. The active-site Proton acceptor is H40. Disulfide bonds link C53/C109, C67/C120, C85/C135, and C92/C99. The active-site Proton donor is the H144. Position 145 (F145) interacts with dUMP.

The protein belongs to the pancreatic ribonuclease family.

It localises to the secreted. Functionally, cleaves preferentially after uridine bases. Has antimicrobial activity against uropathogenic E.coli (UPEC). Probably contributes to urinary tract sterility. This Rattus norvegicus (Rat) protein is Ribonuclease 4 (Rnase4).